Consider the following 822-residue polypeptide: Tubulin polyglutamylase TTLL6 (822 aa).

The disordered stretch occupies residues 1 to 24 (MLQCLTSESEEGAEEREESSTEDL). Over residues 8-24 (ESEEGAEEREESSTEDL) the composition is skewed to acidic residues. One can recognise a TTL domain in the interval 57–400 (KKRLVINLSN…GNCDKKKVLE (344 aa)). ATP is bound by residues K174, 180 to 181 (QG), 202 to 205 (QLYI), and 215 to 217 (KFD). Q180 contacts a protein. Residue R241 participates in L-glutamate binding. 263-264 (TN) contributes to the ATP binding site. Positions 265, 266, and 283 each coordinate L-glutamate. Mg(2+) contacts are provided by D346, E359, and N361. H362 is an a protein binding site. Residues 371-450 (KLDKEVKDSL…CGGFRLIYPG (80 aa)) are c-MTBD region. K377 serves as a coordination point for L-glutamate. 2 disordered regions span residues 736-772 (PLFP…SVFV) and 791-822 (TQAR…TATA). Residues 802–814 (SHSGTTTRDSSTQ) show a composition bias toward polar residues.

The protein belongs to the tubulin--tyrosine ligase family. As to quaternary structure, found in a complex with CEP41. Mg(2+) serves as cofactor. In terms of tissue distribution, highly expressed in testis. Expressed in brain, heart, kidney, liver, lung, muscle and trachea. In the brain, specifically expressed in ependymal cilia.

The protein resides in the cytoplasm. It localises to the cytoskeleton. It is found in the cilium axoneme. The protein localises to the cilium basal body. It catalyses the reaction L-glutamyl-[protein] + L-glutamate + ATP = gamma-L-glutamyl-L-glutamyl-[protein] + ADP + phosphate + H(+). The enzyme catalyses (L-glutamyl)(n)-gamma-L-glutamyl-L-glutamyl-[protein] + L-glutamate + ATP = (L-glutamyl)(n+1)-gamma-L-glutamyl-L-glutamyl-[protein] + ADP + phosphate + H(+). Its function is as follows. Polyglutamylase which modifies both tubulin and non-tubulin proteins, generating alpha-linked polyglutamate side chains on the gamma-carboxyl group of specific glutamate residues of target proteins. Preferentially mediates ATP-dependent long polyglutamate chain elongation over the initiation step of the polyglutamylation reaction. Preferentially modifies the alpha-tubulin tail over a beta-tail. Promotes tubulin polyglutamylation which stimulates spastin/SPAST-mediated microtubule severing, thereby regulating microtubule functions. Mediates microtubule polyglutamylation in primary cilia axoneme which is important for ciliary structural formation and motility. Mediates microtubule polyglutamylation in motile cilia, necessary for the regulation of ciliary coordinated beating. Polyglutamylates non-tubulin protein nucleotidyltransferase CGAS, leading to CGAS DNA-binding inhibition, thereby preventing antiviral defense response. This is Tubulin polyglutamylase TTLL6 from Mus musculus (Mouse).